Reading from the N-terminus, the 484-residue chain is tRNA sulfurtransferase (484 aa).

Residues 63–167 (EAFGERLACI…NDNLYLIDKR (105 aa)) enclose the THUMP domain. Residues 185–186 (LI), Lys267, Gly289, and Gln298 contribute to the ATP site. Residues Cys346 and Cys458 are joined by a disulfide bond. One can recognise a Rhodanese domain in the interval 406 to 484 (INANEIIIDV…GYTNVKVYRP (79 aa)). Cys458 serves as the catalytic Cysteine persulfide intermediate.

The protein belongs to the ThiI family.

It localises to the cytoplasm. The catalysed reaction is [ThiI sulfur-carrier protein]-S-sulfanyl-L-cysteine + a uridine in tRNA + 2 reduced [2Fe-2S]-[ferredoxin] + ATP + H(+) = [ThiI sulfur-carrier protein]-L-cysteine + a 4-thiouridine in tRNA + 2 oxidized [2Fe-2S]-[ferredoxin] + AMP + diphosphate. The enzyme catalyses [ThiS sulfur-carrier protein]-C-terminal Gly-Gly-AMP + S-sulfanyl-L-cysteinyl-[cysteine desulfurase] + AH2 = [ThiS sulfur-carrier protein]-C-terminal-Gly-aminoethanethioate + L-cysteinyl-[cysteine desulfurase] + A + AMP + 2 H(+). The protein operates within cofactor biosynthesis; thiamine diphosphate biosynthesis. Catalyzes the ATP-dependent transfer of a sulfur to tRNA to produce 4-thiouridine in position 8 of tRNAs, which functions as a near-UV photosensor. Also catalyzes the transfer of sulfur to the sulfur carrier protein ThiS, forming ThiS-thiocarboxylate. This is a step in the synthesis of thiazole, in the thiamine biosynthesis pathway. The sulfur is donated as persulfide by IscS. This is tRNA sulfurtransferase from Shewanella halifaxensis (strain HAW-EB4).